The chain runs to 156 residues: Phosphopantetheine adenylyltransferase (156 aa).

T9 serves as a coordination point for substrate. ATP-binding positions include 9 to 10 (TF) and H17. Residues K41, L73, and R87 each coordinate substrate. ATP contacts are provided by residues 88-90 (GVR), E98, and 123-129 (WVFVSST).

This sequence belongs to the bacterial CoaD family. Homohexamer. Mg(2+) serves as cofactor.

Its subcellular location is the cytoplasm. It carries out the reaction (R)-4'-phosphopantetheine + ATP + H(+) = 3'-dephospho-CoA + diphosphate. It participates in cofactor biosynthesis; coenzyme A biosynthesis; CoA from (R)-pantothenate: step 4/5. Its function is as follows. Reversibly transfers an adenylyl group from ATP to 4'-phosphopantetheine, yielding dephospho-CoA (dPCoA) and pyrophosphate. In Haemophilus influenzae (strain PittEE), this protein is Phosphopantetheine adenylyltransferase.